The chain runs to 448 residues: Thymidine phosphorylase (448 aa).

It belongs to the thymidine/pyrimidine-nucleoside phosphorylase family. As to quaternary structure, homodimer.

It catalyses the reaction thymidine + phosphate = 2-deoxy-alpha-D-ribose 1-phosphate + thymine. The protein operates within pyrimidine metabolism; dTMP biosynthesis via salvage pathway; dTMP from thymine: step 1/2. Its function is as follows. The enzymes which catalyze the reversible phosphorolysis of pyrimidine nucleosides are involved in the degradation of these compounds and in their utilization as carbon and energy sources, or in the rescue of pyrimidine bases for nucleotide synthesis. The protein is Thymidine phosphorylase of Vibrio cholerae serotype O1 (strain ATCC 39315 / El Tor Inaba N16961).